A 531-amino-acid polypeptide reads, in one-letter code: Light-independent protochlorophyllide reductase subunit B (531 aa).

Residue D36 participates in [4Fe-4S] cluster binding. Residue D296 is the Proton donor of the active site. Residue 431-432 (GM) participates in substrate binding.

The protein belongs to the ChlB/BchB/BchZ family. Protochlorophyllide reductase is composed of three subunits; ChlL, ChlN and ChlB. Forms a heterotetramer of two ChlB and two ChlN subunits. [4Fe-4S] cluster is required as a cofactor.

The protein resides in the plastid. The protein localises to the chloroplast. The catalysed reaction is chlorophyllide a + oxidized 2[4Fe-4S]-[ferredoxin] + 2 ADP + 2 phosphate = protochlorophyllide a + reduced 2[4Fe-4S]-[ferredoxin] + 2 ATP + 2 H2O. Its pathway is porphyrin-containing compound metabolism; chlorophyll biosynthesis (light-independent). Component of the dark-operative protochlorophyllide reductase (DPOR) that uses Mg-ATP and reduced ferredoxin to reduce ring D of protochlorophyllide (Pchlide) to form chlorophyllide a (Chlide). This reaction is light-independent. The NB-protein (ChlN-ChlB) is the catalytic component of the complex. This chain is Light-independent protochlorophyllide reductase subunit B, found in Nephroselmis olivacea (Green alga).